The primary structure comprises 494 residues: Alpha-amylase B (494 aa).

A signal peptide spans 1–18 (MFLAKSIVCLALLAVANA). Gln-19 is subject to Pyrrolidone carboxylic acid. Cys-46 and Cys-102 are disulfide-bonded. Ca(2+)-binding residues include Asn-116, Arg-165, and Asp-174. A disulfide bond links Cys-153 and Cys-167. Arg-202 provides a ligand contact to chloride. Catalysis depends on Asp-204, which acts as the Nucleophile. Ca(2+) is bound at residue His-208. Glu-241 functions as the Proton donor in the catalytic mechanism. Chloride-binding residues include Asn-304 and Arg-343. Intrachain disulfides connect Cys-376–Cys-382 and Cys-448–Cys-460.

The protein belongs to the glycosyl hydrolase 13 family. Monomer. It depends on Ca(2+) as a cofactor. The cofactor is chloride.

The enzyme catalyses Endohydrolysis of (1-&gt;4)-alpha-D-glucosidic linkages in polysaccharides containing three or more (1-&gt;4)-alpha-linked D-glucose units.. This chain is Alpha-amylase B (Amy-d), found in Drosophila yakuba (Fruit fly).